Consider the following 87-residue polypeptide: MAKEELIELNGIVDEVLPDSRYRVKLDNGIEVGAYASGRMRKHRIRILAGDRVTLEMSPYDLTKGRINFRHKDERSGPPSRPPQHRR.

An S1-like domain is found at 1–72; the sequence is MAKEELIELN…TKGRINFRHK (72 aa). The interval 66–87 is disordered; that stretch reads RINFRHKDERSGPPSRPPQHRR.

Belongs to the IF-1 family. As to quaternary structure, component of the 30S ribosomal translation pre-initiation complex which assembles on the 30S ribosome in the order IF-2 and IF-3, IF-1 and N-formylmethionyl-tRNA(fMet); mRNA recruitment can occur at any time during PIC assembly.

Its subcellular location is the cytoplasm. Its function is as follows. One of the essential components for the initiation of protein synthesis. Stabilizes the binding of IF-2 and IF-3 on the 30S subunit to which N-formylmethionyl-tRNA(fMet) subsequently binds. Helps modulate mRNA selection, yielding the 30S pre-initiation complex (PIC). Upon addition of the 50S ribosomal subunit IF-1, IF-2 and IF-3 are released leaving the mature 70S translation initiation complex. The chain is Translation initiation factor IF-1 2 from Bordetella parapertussis (strain 12822 / ATCC BAA-587 / NCTC 13253).